The chain runs to 346 residues: Phosphoribosylformylglycinamidine cyclo-ligase (346 aa).

Belongs to the AIR synthase family.

Its subcellular location is the cytoplasm. It catalyses the reaction 2-formamido-N(1)-(5-O-phospho-beta-D-ribosyl)acetamidine + ATP = 5-amino-1-(5-phospho-beta-D-ribosyl)imidazole + ADP + phosphate + H(+). It participates in purine metabolism; IMP biosynthesis via de novo pathway; 5-amino-1-(5-phospho-D-ribosyl)imidazole from N(2)-formyl-N(1)-(5-phospho-D-ribosyl)glycinamide: step 2/2. The chain is Phosphoribosylformylglycinamidine cyclo-ligase from Vibrio parahaemolyticus serotype O3:K6 (strain RIMD 2210633).